We begin with the raw amino-acid sequence, 691 residues long: MSVPAQPAPGADGGDPRQPIRVPAGTTAAAAIGEAGLPRRGAPDAIVVVRDAEGKLRDLSWVPDADAEVTPIAANTDDGRSVIRHSTAHVLAQAVQDLFPQAKLGIGPPITDGFYYDFEVLEPFTPDDLQALEKRMRQIVKEGQLFDRRVFESKDQAREELANEPYKLELVDDKSGDPDVMEVGGDELTAYDNLNPRTRERVWGDLCRGPHIPTTKHIPAFKLTRSSAAYWRGDQKNASLQRIYGTAWESQEALDKHIELIEEAQRRDHRKLGVELDLFSFPDEIGSGLAVFHPKGGIVRRELEDYSRRKHTEAGYQFVNSPHITKAQLFHTSGHLDWYADGMFPPMQIDAEYNADGTVRKPGQDYYLKPMNCPMHCLIFRARGRSYRELPLRLFEFGTVYRYEKSGVVHGLTRVRGLTMDDAHIFCTREQMRDELRSLLRFVLDLLSDYGLTDFYLELSTKDPDKFVGSDEVWEEATNVLAEVGAESGLELVPDPGGAAFYGPKISVQVKDALGRTWQMSTIQLDFNFPERFGLEYTAADGTRQRPVMIHRALFGSIERFFGILTEHYAGAFPAWLAPVQAVGIPVADEHVAYLEQVAAQLKSHGVRVEVDTSDDRMAKKIVHHTNQKVPFMLLAGDRDVQADAVSFRFGDRTQINGVPREAAVAAIVDWISRRENATPTAELVKVDSGE.

Residues M1–V22 are disordered. Positions M1–A73 constitute a TGS domain. The tract at residues D268–P574 is catalytic. Positions 373, 424, and 551 each coordinate Zn(2+).

This sequence belongs to the class-II aminoacyl-tRNA synthetase family. In terms of assembly, homodimer. Zn(2+) serves as cofactor.

It is found in the cytoplasm. The catalysed reaction is tRNA(Thr) + L-threonine + ATP = L-threonyl-tRNA(Thr) + AMP + diphosphate + H(+). Its function is as follows. Catalyzes the attachment of threonine to tRNA(Thr) in a two-step reaction: L-threonine is first activated by ATP to form Thr-AMP and then transferred to the acceptor end of tRNA(Thr). Also edits incorrectly charged L-seryl-tRNA(Thr). The polypeptide is Threonine--tRNA ligase (Mycobacterium marinum (strain ATCC BAA-535 / M)).